The sequence spans 320 residues: Phosphate acyltransferase (320 aa).

It belongs to the PlsX family. As to quaternary structure, homodimer. Probably interacts with PlsY.

It is found in the cytoplasm. It carries out the reaction a fatty acyl-[ACP] + phosphate = an acyl phosphate + holo-[ACP]. It participates in lipid metabolism; phospholipid metabolism. In terms of biological role, catalyzes the reversible formation of acyl-phosphate (acyl-PO(4)) from acyl-[acyl-carrier-protein] (acyl-ACP). This enzyme utilizes acyl-ACP as fatty acyl donor, but not acyl-CoA. In Syntrophomonas wolfei subsp. wolfei (strain DSM 2245B / Goettingen), this protein is Phosphate acyltransferase.